Consider the following 1384-residue polypeptide: Contactin-associated protein 1 (1384 aa).

An N-terminal signal peptide occupies residues 1–19; the sequence is MMHLRLFCILLAAVSGAEG. Residues 20–1283 lie on the Extracellular side of the membrane; sequence WGYYGCDEEL…PYYHDEGWVA (1264 aa). The F5/8 type C domain maps to 25 to 168; it reads CDEELVGPLY…IGLRLGLYGC (144 aa). An intrachain disulfide couples cysteine 25 to cysteine 168. N-linked (GlcNAc...) asparagine glycosylation is found at asparagine 120, asparagine 128, and asparagine 276. Laminin G-like domains lie at 203 to 355 and 389 to 538; these read FKTE…AFRC and FRTW…FDTC. Cysteine 323 and cysteine 355 are joined by a disulfide. N-linked (GlcNAc...) asparagine glycosylation is found at asparagine 420, asparagine 499, and asparagine 518. Intrachain disulfides connect cysteine 506–cysteine 538, cysteine 544–cysteine 555, cysteine 549–cysteine 564, and cysteine 566–cysteine 576. The EGF-like 1 domain maps to 540-577; that stretch reads ITDRCSPNMCEHDGRCYQSWDDFICYCELTGYKGETCH. One can recognise a Fibrinogen C-terminal domain in the interval 576-795; that stretch reads CHTPLYKESC…NTISFHTGAA (220 aa). 9 N-linked (GlcNAc...) asparagine glycosylation sites follow: asparagine 597, asparagine 653, asparagine 664, asparagine 763, asparagine 804, asparagine 843, asparagine 860, asparagine 948, and asparagine 956. In terms of domain architecture, Laminin G-like 3 spans 813-956; the sequence is FRTSAPSGVF…ANASEGTSPN (144 aa). 4 disulfides stabilise this stretch: cysteine 930–cysteine 957, cysteine 961–cysteine 974, cysteine 968–cysteine 983, and cysteine 985–cysteine 995. Positions 957–996 constitute an EGF-like 2 domain; sequence CTGHCAHPRLPCFHGGRCVERYSYYTCDCDLTAFDGPYCN. Residues asparagine 1078 and asparagine 1147 are each glycosylated (N-linked (GlcNAc...) asparagine). Residues 1088–1250 form the Laminin G-like 4 domain; it reads FSTSSAPAVL…VQGELSESNC (163 aa). Residues cysteine 1209 and cysteine 1250 are joined by a disulfide bond. Residues 1284–1304 form a helical membrane-spanning segment; it reads ILLGFLVAFLLLGLVGMLVLF. At 1305–1384 the chain is on the cytoplasmic side; the sequence is YLQNHRYKGS…PQILEESRSE (80 aa). Over residues 1319–1328 the composition is skewed to basic and acidic residues; it reads EPKAAHEYHP. The tract at residues 1319–1384 is disordered; it reads EPKAAHEYHP…PQILEESRSE (66 aa). The short motif at 1328-1369 is the SH3-binding element; that stretch reads PGSKPPLPTSGPAQVPTPTAAPNQAPASAPAPAPTPAPAPGP. The segment covering 1339–1355 has biased composition (low complexity); that stretch reads PAQVPTPTAAPNQAPAS. A compositionally biased stretch (pro residues) spans 1356-1368; that stretch reads APAPAPTPAPAPG. At serine 1383 the chain carries Phosphoserine.

Belongs to the neurexin family. Interacts with CNTN1/contactin in cis form. In terms of tissue distribution, predominantly expressed in brain. Weak expression detected in ovary, pancreas, colon, lung, heart, intestine and testis.

It is found in the membrane. Its subcellular location is the cell junction. The protein localises to the paranodal septate junction. In terms of biological role, required, with CNTNAP2, for radial and longitudinal organization of myelinated axons. Plays a role in the formation of functional distinct domains critical for saltatory conduction of nerve impulses in myelinated nerve fibers. Demarcates the paranodal region of the axo-glial junction. In association with contactin involved in the signaling between axons and myelinating glial cells. The protein is Contactin-associated protein 1 (CNTNAP1) of Homo sapiens (Human).